The chain runs to 364 residues: Sec-independent protein translocase protein TatC (364 aa).

The next 7 membrane-spanning stretches (helical) occupy residues 42–62 (IALLAFAIAGVVCFIFEPRIF), 107–127 (MIAAVVVSSPVWLYQLWSFIT), 139–159 (LTFVGVSLVLFATGAVFAYLT), 160–180 (LSTGLGLLLGFGGNGLVSVLD), 194–214 (IFGLSFEVPLLVMMLNLAGIV), 225–245 (PEIFLVFVFAAVVTPSQDPFT), and 246–266 (MLALGLPMVLLYEVALIIGWL). The disordered stretch occupies residues 277-364 (TSPYADLDDD…STDVTHGDIT (88 aa)). Acidic residues predominate over residues 282–295 (DLDDDETSPLDFDD). A compositionally biased stretch (low complexity) spans 301–320 (AASAGPAATATSPGTANPPG). Positions 324–344 (PPGTANPVGTANPVGTGSSTP) are enriched in polar residues.

It belongs to the TatC family. As to quaternary structure, the Tat system comprises two distinct complexes: a TatABC complex, containing multiple copies of TatA, TatB and TatC subunits, and a separate TatA complex, containing only TatA subunits. Substrates initially bind to the TatABC complex, which probably triggers association of the separate TatA complex to form the active translocon.

It is found in the cell membrane. In terms of biological role, part of the twin-arginine translocation (Tat) system that transports large folded proteins containing a characteristic twin-arginine motif in their signal peptide across membranes. Together with TatB, TatC is part of a receptor directly interacting with Tat signal peptides. This Frankia casuarinae (strain DSM 45818 / CECT 9043 / HFP020203 / CcI3) protein is Sec-independent protein translocase protein TatC.